Reading from the N-terminus, the 121-residue chain is Basic phospholipase A2 VRV-PL-V (121 aa).

Cystine bridges form between C26–C115, C28–C44, C43–C95, C49–C121, C50–C88, C57–C81, and C75–C86. Residues Y27, G29, and G31 each coordinate Ca(2+). Residue H47 is part of the active site. D48 is a binding site for Ca(2+). The active site involves D89.

It belongs to the phospholipase A2 family. Group II subfamily. D49 sub-subfamily. In terms of assembly, monomer. Ca(2+) is required as a cofactor. As to expression, expressed by the venom gland.

The protein resides in the secreted. It catalyses the reaction a 1,2-diacyl-sn-glycero-3-phosphocholine + H2O = a 1-acyl-sn-glycero-3-phosphocholine + a fatty acid + H(+). In terms of biological role, snake venom phospholipase A2 (PLA2) that has a low enzymatic activity. PLA2 catalyzes the calcium-dependent hydrolysis of the 2-acyl groups in 3-sn-phosphoglycerides. The protein is Basic phospholipase A2 VRV-PL-V of Daboia russelii (Russel's viper).